The following is a 575-amino-acid chain: Urease subunit alpha (575 aa).

The region spanning 138 to 575 (GAVDCHVHLI…LPMTQRYFLF (438 aa)) is the Urease domain. Residues His-143, His-145, and Lys-226 each coordinate Ni(2+). Lys-226 is modified (N6-carboxylysine). His-228 lines the substrate pocket. Residues His-255 and His-281 each coordinate Ni(2+). Residue His-329 is the Proton donor of the active site. Residue Asp-369 coordinates Ni(2+).

The protein belongs to the metallo-dependent hydrolases superfamily. Urease alpha subunit family. In terms of assembly, heterotrimer of UreA (gamma), UreB (beta) and UreC (alpha) subunits. Three heterotrimers associate to form the active enzyme. The cofactor is Ni cation. Post-translationally, carboxylation allows a single lysine to coordinate two nickel ions.

It is found in the cytoplasm. It carries out the reaction urea + 2 H2O + H(+) = hydrogencarbonate + 2 NH4(+). Its pathway is nitrogen metabolism; urea degradation; CO(2) and NH(3) from urea (urease route): step 1/1. The protein is Urease subunit alpha of Frankia casuarinae (strain DSM 45818 / CECT 9043 / HFP020203 / CcI3).